The sequence spans 1400 residues: DNA-directed RNA polymerase subunit beta' (1400 aa).

Residues cysteine 71, cysteine 73, cysteine 86, and cysteine 89 each contribute to the Zn(2+) site. Residues aspartate 462, aspartate 464, and aspartate 466 each contribute to the Mg(2+) site. 4 residues coordinate Zn(2+): cysteine 820, cysteine 893, cysteine 900, and cysteine 903.

Belongs to the RNA polymerase beta' chain family. In terms of assembly, the RNAP catalytic core consists of 2 alpha, 1 beta, 1 beta' and 1 omega subunit. When a sigma factor is associated with the core the holoenzyme is formed, which can initiate transcription. The cofactor is Mg(2+). Zn(2+) is required as a cofactor.

The enzyme catalyses RNA(n) + a ribonucleoside 5'-triphosphate = RNA(n+1) + diphosphate. In terms of biological role, DNA-dependent RNA polymerase catalyzes the transcription of DNA into RNA using the four ribonucleoside triphosphates as substrates. This Methylobacterium nodulans (strain LMG 21967 / CNCM I-2342 / ORS 2060) protein is DNA-directed RNA polymerase subunit beta'.